A 214-amino-acid chain; its full sequence is Thymidylate kinase (214 aa).

7-14 (GIDGAGKS) is a binding site for ATP.

The protein belongs to the thymidylate kinase family.

The catalysed reaction is dTMP + ATP = dTDP + ADP. Its function is as follows. Phosphorylation of dTMP to form dTDP in both de novo and salvage pathways of dTTP synthesis. The polypeptide is Thymidylate kinase (Chlorobaculum tepidum (strain ATCC 49652 / DSM 12025 / NBRC 103806 / TLS) (Chlorobium tepidum)).